We begin with the raw amino-acid sequence, 227 residues long: NMTVFRLNRDCTFPHPKHAESDGLLAVGGDLSAKRLINGYRDGIFPWYSEGDPILWWYTHPRFVIYPDRFTAGKRLMRYWKKTSYTFTIDQAFSQVIGLCGSSRTGRGEETWILPEMREAYGQLHELGYAHSVECWDVDRLVGGLYGVELGGVFFGESMFSTVSNSSKFCLIYLVEQARKRGVQLIDCQMTTRHLLQFGAVEISGEKFYQHLQLLIADIGPQPAWKI.

It belongs to the L/F-transferase family.

The protein localises to the cytoplasm. The catalysed reaction is N-terminal L-lysyl-[protein] + L-leucyl-tRNA(Leu) = N-terminal L-leucyl-L-lysyl-[protein] + tRNA(Leu) + H(+). The enzyme catalyses N-terminal L-arginyl-[protein] + L-leucyl-tRNA(Leu) = N-terminal L-leucyl-L-arginyl-[protein] + tRNA(Leu) + H(+). It carries out the reaction L-phenylalanyl-tRNA(Phe) + an N-terminal L-alpha-aminoacyl-[protein] = an N-terminal L-phenylalanyl-L-alpha-aminoacyl-[protein] + tRNA(Phe). In terms of biological role, functions in the N-end rule pathway of protein degradation where it conjugates Leu, Phe and, less efficiently, Met from aminoacyl-tRNAs to the N-termini of proteins containing an N-terminal arginine or lysine. The chain is Leucyl/phenylalanyl-tRNA--protein transferase from Desulfotalea psychrophila (strain LSv54 / DSM 12343).